We begin with the raw amino-acid sequence, 51 residues long: TLSGPVSDPAKNDGGFEVIKKHKEHIAAYGEGNERHETADINTFLWGVANR.

It belongs to the glutamine synthetase family. In terms of assembly, homooctamer.

The protein localises to the cytoplasm. It carries out the reaction L-glutamate + NH4(+) + ATP = L-glutamine + ADP + phosphate + H(+). This Vitis sp. (Grape) protein is Glutamine synthetase.